The primary structure comprises 875 residues: DNA mismatch repair protein MutS (875 aa).

626-633 lines the ATP pocket; the sequence is GPNMAGKS. The disordered stretch occupies residues 830–855; sequence RAAPPPPAPAAPKTSPVEERLREIQP. Positions 845–855 are enriched in basic and acidic residues; sequence PVEERLREIQP.

The protein belongs to the DNA mismatch repair MutS family.

In terms of biological role, this protein is involved in the repair of mismatches in DNA. It is possible that it carries out the mismatch recognition step. This protein has a weak ATPase activity. This Cereibacter sphaeroides (strain ATCC 17023 / DSM 158 / JCM 6121 / CCUG 31486 / LMG 2827 / NBRC 12203 / NCIMB 8253 / ATH 2.4.1.) (Rhodobacter sphaeroides) protein is DNA mismatch repair protein MutS.